The sequence spans 161 residues: GTP-dependent dephospho-CoA kinase (161 aa).

Residues aspartate 40, valine 41, valine 42, aspartate 59, and glutamate 112 each coordinate GTP.

It belongs to the GTP-dependent DPCK family.

The catalysed reaction is 3'-dephospho-CoA + GTP = GDP + CoA + H(+). It functions in the pathway cofactor biosynthesis; coenzyme A biosynthesis. Catalyzes the GTP-dependent phosphorylation of the 3'-hydroxyl group of dephosphocoenzyme A to form coenzyme A (CoA). In Methanoculleus marisnigri (strain ATCC 35101 / DSM 1498 / JR1), this protein is GTP-dependent dephospho-CoA kinase.